Here is a 251-residue protein sequence, read N- to C-terminus: Phosphate import ATP-binding protein PstB (251 aa).

One can recognise an ABC transporter domain in the interval 5–246; the sequence is IKIRGVNFFY…PKDKRTEDYI (242 aa). An ATP-binding site is contributed by 37–44; it reads GPSGCGKS.

This sequence belongs to the ABC transporter superfamily. Phosphate importer (TC 3.A.1.7) family. As to quaternary structure, the complex is composed of two ATP-binding proteins (PstB), two transmembrane proteins (PstC and PstA) and a solute-binding protein (PstS).

The protein localises to the cell membrane. The enzyme catalyses phosphate(out) + ATP + H2O = ADP + 2 phosphate(in) + H(+). Part of the ABC transporter complex PstSACB involved in phosphate import. Responsible for energy coupling to the transport system. The chain is Phosphate import ATP-binding protein PstB from Dehalococcoides mccartyi (strain ATCC BAA-2266 / KCTC 15142 / 195) (Dehalococcoides ethenogenes (strain 195)).